A 169-amino-acid chain; its full sequence is Required for excision 1-B domain-containing protein (169 aa).

This is Required for excision 1-B domain-containing protein from Mus musculus (Mouse).